An 856-amino-acid chain; its full sequence is Facilitated trehalose transporter Tret1 (856 aa).

2 disordered regions span residues 1–29 and 62–202; these read MSGR…LKEK and DPFL…KATS. Residues 1-389 lie on the Cytoplasmic side of the membrane; sequence MSGRDNRGAG…LEVYRPTTNP (389 aa). Over residues 69–80 the composition is skewed to polar residues; it reads VSPQRHPQTVRT. A compositionally biased stretch (basic and acidic residues) spans 133–142; that stretch reads EIREHRDRQQ. Positions 170–180 are enriched in polar residues; it reads GNSNTNSNKAA. Phosphoserine is present on residues serine 247, serine 248, serine 249, serine 319, and serine 321. Residues 326-345 are disordered; that stretch reads LTSRQHFQQQRSISTDSRKS. Over residues 329 to 340 the composition is skewed to polar residues; that stretch reads RQHFQQQRSIST. A helical membrane pass occupies residues 390-410; sequence IFIWTQVIAALSVSLGSLVVG. Residues 411-439 are Extracellular-facing; it reads FVSAYTSPALVSMSDPNITSFTVTKDAGS. Asparagine 427 carries N-linked (GlcNAc...) asparagine glycosylation. The chain crosses the membrane as a helical span at residues 440-460; the sequence is WVGGIMPLAGLVGGVAGGPLI. At 461-472 the chain is on the cytoplasmic side; sequence EYMGRRNTILAT. Residues 473-493 form a helical membrane-spanning segment; it reads AVPFIVSSLLIACAVNVAMVL. At 494-496 the chain is on the extracellular side; sequence CGR. A helical transmembrane segment spans residues 497–517; sequence FLAGFCVGIASLSLPVYLGET. The Cytoplasmic segment spans residues 518–527; that stretch reads VQPEVRGTLG. A helical membrane pass occupies residues 528-548; sequence LLPTAFGNIGILVCFVAGSFM. A glycan (N-linked (GlcNAc...) asparagine) is linked at asparagine 549. The Extracellular portion of the chain corresponds to 549-551; sequence NWS. Residues 552 to 572 form a helical membrane-spanning segment; that stretch reads MLAFLGAALPVPFLILMFLIP. The Cytoplasmic segment spans residues 573–635; that stretch reads ETPRWYVSRG…ELLKRNNLKP (63 aa). A helical transmembrane segment spans residues 636–656; it reads LSISLGLMFFQQFSGINAVIF. Residues 657–672 lie on the Extracellular side of the membrane; sequence YTVQIFKDAGSTIDGN. A helical membrane pass occupies residues 673 to 693; sequence VCTIIVGVVNFVATFIGILLI. The Cytoplasmic segment spans residues 694-699; that stretch reads DRAGRK. The chain crosses the membrane as a helical span at residues 700-720; it reads ILLYASDIAMVLTLFVLGGFF. At 721–739 the chain is on the extracellular side; it reads YCKAHGPDVSHLGWLPLTC. Residues 740–760 traverse the membrane as a helical segment; it reads FVVYILGFSVGFGPIPWLMMG. The Cytoplasmic segment spans residues 761 to 766; sequence EILPAK. A helical transmembrane segment spans residues 767–787; that stretch reads IRGAAASVATSFNWTCTFVVT. Residues 788–800 are Extracellular-facing; sequence KTFQDLVGSLGAH. The helical transmembrane segment at 801–821 threads the bilayer; sequence GAFWLFGAICFVGLFFVILYV. At 822–856 the chain is on the cytoplasmic side; sequence PETQGKTLEDIERKMMGRVRRMSSVANIKPLSFNM. Phosphoserine occurs at positions 844 and 845.

It belongs to the major facilitator superfamily. Sugar transporter (TC 2.A.1.1) family. Trehalose transporter subfamily.

The protein resides in the cell membrane. Low-capacity facilitative transporter for trehalose. Does not transport maltose, sucrose or lactose. Mediates the bidirectional transfer of trehalose. Responsible for the transport of trehalose synthesized in the fat body and the incorporation of trehalose into other tissues that require a carbon source, thereby regulating trehalose levels in the hemolymph. In Drosophila yakuba (Fruit fly), this protein is Facilitated trehalose transporter Tret1.